A 567-amino-acid chain; its full sequence is Proline--tRNA ligase (567 aa).

It belongs to the class-II aminoacyl-tRNA synthetase family. ProS type 1 subfamily. Homodimer.

It localises to the cytoplasm. It carries out the reaction tRNA(Pro) + L-proline + ATP = L-prolyl-tRNA(Pro) + AMP + diphosphate. Its function is as follows. Catalyzes the attachment of proline to tRNA(Pro) in a two-step reaction: proline is first activated by ATP to form Pro-AMP and then transferred to the acceptor end of tRNA(Pro). As ProRS can inadvertently accommodate and process non-cognate amino acids such as alanine and cysteine, to avoid such errors it has two additional distinct editing activities against alanine. One activity is designated as 'pretransfer' editing and involves the tRNA(Pro)-independent hydrolysis of activated Ala-AMP. The other activity is designated 'posttransfer' editing and involves deacylation of mischarged Ala-tRNA(Pro). The misacylated Cys-tRNA(Pro) is not edited by ProRS. The chain is Proline--tRNA ligase from Staphylococcus aureus (strain bovine RF122 / ET3-1).